Here is a 341-residue protein sequence, read N- to C-terminus: Anthranilate phosphoribosyltransferase (341 aa).

Residues G81, 84–85, T89, 91–94, 109–117, and T121 each bind 5-phospho-alpha-D-ribose 1-diphosphate; these read GD, NIST, and KHGNRKASS. Anthranilate is bound at residue G81. Position 93 (S93) interacts with Mg(2+). N112 serves as a coordination point for anthranilate. R167 lines the anthranilate pocket. Mg(2+) contacts are provided by D226 and E227.

The protein belongs to the anthranilate phosphoribosyltransferase family. As to quaternary structure, homodimer. Mg(2+) is required as a cofactor.

The catalysed reaction is N-(5-phospho-beta-D-ribosyl)anthranilate + diphosphate = 5-phospho-alpha-D-ribose 1-diphosphate + anthranilate. It participates in amino-acid biosynthesis; L-tryptophan biosynthesis; L-tryptophan from chorismate: step 2/5. Catalyzes the transfer of the phosphoribosyl group of 5-phosphorylribose-1-pyrophosphate (PRPP) to anthranilate to yield N-(5'-phosphoribosyl)-anthranilate (PRA). This chain is Anthranilate phosphoribosyltransferase, found in Parvibaculum lavamentivorans (strain DS-1 / DSM 13023 / NCIMB 13966).